The following is a 74-amino-acid chain: MCCGPLGFCGPCSPCGGPCGPCGPCGPCGSCCSPCGSCCAPCGPCGPCGPCCGGCGPCGPCGPCCGPCRPYCGC.

Belongs to the MST(3)CGP family. Testis.

In Drosophila melanogaster (Fruit fly), this protein is Male-specific sperm protein Mst84Db (Mst84Db).